The following is a 450-amino-acid chain: Tubulin beta-3 chain (450 aa).

Residues 1 to 4 (MREI) carry the MREI motif motif. Glutamine 11, glutamate 69, serine 138, glycine 142, threonine 143, and glycine 144 together coordinate GTP. Glutamate 69 is a Mg(2+) binding site. At serine 172 the chain carries Phosphoserine; by CDK1. GTP-binding residues include asparagine 204 and asparagine 226. The tract at residues 422–450 (YQQYQDATAEEEGEMYEDDDEESEAQGPK) is disordered. Over residues 429–450 (TAEEEGEMYEDDDEESEAQGPK) the composition is skewed to acidic residues. Glutamate 438 is modified (5-glutamyl polyglutamate). A Phosphoserine modification is found at serine 444.

This sequence belongs to the tubulin family. In terms of assembly, heterodimer of alpha- and beta-tubulin. A typical microtubule is a hollow water-filled tube with an outer diameter of 25 nm and an inner diameter of 15 nM. Alpha-beta heterodimers associate head-to-tail to form protofilaments running lengthwise along the microtubule wall with the beta-tubulin subunit facing the microtubule plus end conferring a structural polarity. Microtubules usually have 13 protofilaments but different protofilament numbers can be found in some organisms and specialized cells. Interacts with gamma-tubulin; the interaction allows microtubules to nucleate from the gamma-tubulin ring complex (gTuRC). Interacts with UNC5C (via cytoplasmic domain); this interaction is decreased by NTN1/Netrin-1. Interacts with NLRP5/MATER at cytoskeleton microtubules. Interacts with DPYSL5. Interacts with CFAP61. Mg(2+) serves as cofactor. Post-translationally, some glutamate residues at the C-terminus are polyglycylated, resulting in polyglycine chains on the gamma-carboxyl group. Glycylation is mainly limited to tubulin incorporated into axonemes (cilia and flagella) whereas glutamylation is prevalent in neuronal cells, centrioles, axonemes, and the mitotic spindle. Both modifications can coexist on the same protein on adjacent residues, and lowering polyglycylation levels increases polyglutamylation, and reciprocally. Cilia and flagella glycylation is required for their stability and maintenance. Flagella glycylation controls sperm motility. In terms of processing, some glutamate residues at the C-terminus are polyglutamylated, resulting in polyglutamate chains on the gamma-carboxyl group. Polyglutamylation plays a key role in microtubule severing by spastin (SPAST). SPAST preferentially recognizes and acts on microtubules decorated with short polyglutamate tails: severing activity by SPAST increases as the number of glutamates per tubulin rises from one to eight, but decreases beyond this glutamylation threshold. Glutamylation is also involved in cilia motility. Phosphorylated on Ser-172 by CDK1 during the cell cycle, from metaphase to telophase, but not in interphase. This phosphorylation inhibits tubulin incorporation into microtubules.

Its subcellular location is the cytoplasm. It localises to the cytoskeleton. It is found in the cell projection. The protein localises to the growth cone. The protein resides in the lamellipodium. Its subcellular location is the filopodium. In terms of biological role, tubulin is the major constituent of microtubules, protein filaments consisting of alpha- and beta-tubulin heterodimers. Microtubules grow by the addition of GTP-tubulin dimers to the microtubule end, where a stabilizing cap forms. Below the cap, alpha-beta tubulin heterodimers are in GDP-bound state, owing to GTPase activity of alpha-tubulin. TUBB3 plays a critical role in proper axon guidance and maintenance. Binding of NTN1/Netrin-1 to its receptor UNC5C might cause dissociation of UNC5C from polymerized TUBB3 in microtubules and thereby lead to increased microtubule dynamics and axon repulsion. Plays a role in dorsal root ganglion axon projection towards the spinal cord. This is Tubulin beta-3 chain (Tubb3) from Rattus norvegicus (Rat).